The primary structure comprises 252 residues: Probable transcriptional regulatory protein THA_1246 (252 aa).

The protein belongs to the TACO1 family.

It is found in the cytoplasm. The sequence is that of Probable transcriptional regulatory protein THA_1246 from Thermosipho africanus (strain TCF52B).